A 146-amino-acid chain; its full sequence is Large-conductance mechanosensitive channel (146 aa).

Helical transmembrane passes span 21–41, 44–64, and 83–103; these read VGII…ADLI, VIGL…LGDG, and GAFI…FLLV.

Belongs to the MscL family. In terms of assembly, homopentamer.

The protein resides in the cell inner membrane. Channel that opens in response to stretch forces in the membrane lipid bilayer. May participate in the regulation of osmotic pressure changes within the cell. The polypeptide is Large-conductance mechanosensitive channel (Cereibacter sphaeroides (strain ATCC 17025 / ATH 2.4.3) (Rhodobacter sphaeroides)).